A 93-amino-acid chain; its full sequence is Large ribosomal subunit protein uL23 (93 aa).

The protein belongs to the universal ribosomal protein uL23 family. In terms of assembly, part of the 50S ribosomal subunit. Contacts protein L29, and trigger factor when it is bound to the ribosome.

One of the early assembly proteins it binds 23S rRNA. One of the proteins that surrounds the polypeptide exit tunnel on the outside of the ribosome. Forms the main docking site for trigger factor binding to the ribosome. The chain is Large ribosomal subunit protein uL23 from Helicobacter acinonychis (strain Sheeba).